Reading from the N-terminus, the 329-residue chain is Flotillin-like protein FloA (329 aa).

2 helical membrane passes run 6–26 and 27–47; these read FIVI…FVPI and GLWI…LVGM.

It belongs to the flotillin-like FloA family. In terms of assembly, homooligomerizes.

Its subcellular location is the cell membrane. The protein localises to the membrane raft. Found in functional membrane microdomains (FMM) that may be equivalent to eukaryotic membrane rafts. FMMs are highly dynamic and increase in number as cells age. Flotillins are thought to be important factors in membrane fluidity. This is Flotillin-like protein FloA from Staphylococcus aureus (strain JH1).